The sequence spans 38 residues: GDNKPPKKGPPNGCFGHKIDRIGSHSGLGCNKVDDNKG.

The interval 1-38 (GDNKPPKKGPPNGCFGHKIDRIGSHSGLGCNKVDDNKG) is disordered. Cys-14 and Cys-30 are disulfide-bonded.

The protein belongs to the natriuretic peptide family. In terms of tissue distribution, expressed by the venom gland.

Its subcellular location is the secreted. Its function is as follows. Inhibits platelet aggregation induced by thrombin, collagen and PAF-acether. Human platelet aggregation induced by thrombin is inhibited by synthetic lebetin-1-alpha with (IC(50)=140 nM). In vivo, inhibits collagen-induced thrombocytopenia in rats. Is not toxic upon intravenous injection into mice and rats. In terms of biological role, inhibits platelet aggregation induced by thrombin, collagen and PAF-acether. Human platelet aggregation induced by thrombin is inhibited by synthetic lebetin-1-beta with (IC(50)=32 nM). In vivo, inhibits collagen-induced thrombocytopenia in rats. Is not toxic upon intravenous injection into mice and rats. Inhibits platelet aggregation induced by thrombin, collagen and PAF-acether. Human platelet aggregation induced by thrombin is inhibited by synthetic lebetin-1-gamma with (IC(50)=5 nM). In vivo, inhibits collagen-induced thrombocytopenia in rats. Is not toxic upon intravenous injection into mice and rats. Functionally, inhibits platelet aggregation induced by thrombin, collagen and PAF-acether. Human platelet aggregation induced by thrombin is inhibited by synthetic lebetin-1-alpha with (IC(50)=2.5 nM). In vivo, inhibits collagen-induced thrombocytopenia in rats. Is not toxic upon intravenous injection into mice and rats. Its function is as follows. Inhibits platelet aggregation induced by thrombin, collagen and PAF-acether. Human platelet aggregation induced by thrombin is inhibited by synthetic lebetin-1-alpha with (IC(50)=2.8 nM). In vivo, inhibits collagen-induced thrombocytopenia in rats. Is not toxic upon intravenous injection into mice and rats. This is Lebetin-2-alpha from Macrovipera lebetinus (Levantine viper).